A 379-amino-acid chain; its full sequence is UDP-4-amino-4-deoxy-L-arabinose--oxoglutarate aminotransferase (379 aa).

N6-(pyridoxal phosphate)lysine is present on lysine 182.

Belongs to the DegT/DnrJ/EryC1 family. ArnB subfamily. As to quaternary structure, homodimer. The cofactor is pyridoxal 5'-phosphate.

It catalyses the reaction UDP-4-amino-4-deoxy-beta-L-arabinose + 2-oxoglutarate = UDP-beta-L-threo-pentopyranos-4-ulose + L-glutamate. It functions in the pathway nucleotide-sugar biosynthesis; UDP-4-deoxy-4-formamido-beta-L-arabinose biosynthesis; UDP-4-deoxy-4-formamido-beta-L-arabinose from UDP-alpha-D-glucuronate: step 2/3. It participates in bacterial outer membrane biogenesis; lipopolysaccharide biosynthesis. Catalyzes the conversion of UDP-4-keto-arabinose (UDP-Ara4O) to UDP-4-amino-4-deoxy-L-arabinose (UDP-L-Ara4N). The modified arabinose is attached to lipid A and is required for resistance to polymyxin and cationic antimicrobial peptides. This is UDP-4-amino-4-deoxy-L-arabinose--oxoglutarate aminotransferase from Klebsiella pneumoniae subsp. pneumoniae (strain ATCC 700721 / MGH 78578).